Reading from the N-terminus, the 273-residue chain is Dermonecrotic toxin LhSicTox-alphaIA1iii (273 aa).

The active site involves histidine 5. Mg(2+) contacts are provided by glutamate 25 and aspartate 27. Catalysis depends on histidine 41, which acts as the Nucleophile. 2 cysteine pairs are disulfide-bonded: cysteine 45-cysteine 51 and cysteine 47-cysteine 190. Residue aspartate 85 participates in Mg(2+) binding.

The protein belongs to the arthropod phospholipase D family. Class II subfamily. Mg(2+) serves as cofactor. As to expression, expressed by the venom gland.

It localises to the secreted. The catalysed reaction is an N-(acyl)-sphingosylphosphocholine = an N-(acyl)-sphingosyl-1,3-cyclic phosphate + choline. It carries out the reaction an N-(acyl)-sphingosylphosphoethanolamine = an N-(acyl)-sphingosyl-1,3-cyclic phosphate + ethanolamine. The enzyme catalyses a 1-acyl-sn-glycero-3-phosphocholine = a 1-acyl-sn-glycero-2,3-cyclic phosphate + choline. It catalyses the reaction a 1-acyl-sn-glycero-3-phosphoethanolamine = a 1-acyl-sn-glycero-2,3-cyclic phosphate + ethanolamine. In terms of biological role, dermonecrotic toxins cleave the phosphodiester linkage between the phosphate and headgroup of certain phospholipids (sphingolipid and lysolipid substrates), forming an alcohol (often choline) and a cyclic phosphate. This toxin acts on sphingomyelin (SM). It may also act on ceramide phosphoethanolamine (CPE), lysophosphatidylcholine (LPC) and lysophosphatidylethanolamine (LPE), but not on lysophosphatidylserine (LPS), and lysophosphatidylglycerol (LPG). It acts by transphosphatidylation, releasing exclusively cyclic phosphate products as second products. Induces dermonecrosis, hemolysis, increased vascular permeability, edema, inflammatory response, and platelet aggregation. The polypeptide is Dermonecrotic toxin LhSicTox-alphaIA1iii (Loxosceles hirsuta (Recluse spider)).